A 379-amino-acid chain; its full sequence is Cell division protein FtsZ (379 aa).

GTP is bound by residues 18 to 22, 105 to 107, E136, R140, and D184; these read GGGVN and GTG.

Belongs to the FtsZ family. As to quaternary structure, homodimer. Polymerizes to form a dynamic ring structure in a strictly GTP-dependent manner. Interacts directly with several other division proteins.

The protein resides in the cytoplasm. Functionally, essential cell division protein that forms a contractile ring structure (Z ring) at the future cell division site. The regulation of the ring assembly controls the timing and the location of cell division. One of the functions of the FtsZ ring is to recruit other cell division proteins to the septum to produce a new cell wall between the dividing cells. Binds GTP and shows GTPase activity. This Mycobacterium leprae (strain TN) protein is Cell division protein FtsZ.